The chain runs to 444 residues: Methylenetetrahydrofolate--tRNA-(uracil-5-)-methyltransferase TrmFO (444 aa).

10 to 15 (GAGLAG) is an FAD binding site.

It belongs to the MnmG family. TrmFO subfamily. FAD serves as cofactor.

It is found in the cytoplasm. It catalyses the reaction uridine(54) in tRNA + (6R)-5,10-methylene-5,6,7,8-tetrahydrofolate + NADH + H(+) = 5-methyluridine(54) in tRNA + (6S)-5,6,7,8-tetrahydrofolate + NAD(+). It carries out the reaction uridine(54) in tRNA + (6R)-5,10-methylene-5,6,7,8-tetrahydrofolate + NADPH + H(+) = 5-methyluridine(54) in tRNA + (6S)-5,6,7,8-tetrahydrofolate + NADP(+). Its function is as follows. Catalyzes the folate-dependent formation of 5-methyl-uridine at position 54 (M-5-U54) in all tRNAs. The chain is Methylenetetrahydrofolate--tRNA-(uracil-5-)-methyltransferase TrmFO from Streptococcus pneumoniae serotype 4 (strain ATCC BAA-334 / TIGR4).